Here is a 43-residue protein sequence, read N- to C-terminus: uncharacterized protein (43 aa).

The first 22 residues, 1–22, serve as a signal peptide directing secretion; it reads MKRKIIAIGIFFRLFIIHIHFS.

This is an uncharacterized protein from Schizosaccharomyces pombe (strain 972 / ATCC 24843) (Fission yeast).